We begin with the raw amino-acid sequence, 328 residues long: Embigin (328 aa).

An N-terminal signal peptide occupies residues Met-1–Gly-33. At Asp-34 to Pro-264 the chain is on the extracellular side. 9 N-linked (GlcNAc...) asparagine glycosylation sites follow: Asn-55, Asn-62, Asn-75, Asn-100, Asn-117, Asn-189, Asn-196, Asn-214, and Asn-219. 2 consecutive Ig-like domains span residues Glu-67 to Lys-160 and Pro-159 to Val-254. 2 disulfide bridges follow: Cys-88–Cys-144 and Cys-180–Cys-238. The chain crosses the membrane as a helical span at residues Phe-265 to Tyr-285. Residues Thr-286–Gln-328 lie on the Cytoplasmic side of the membrane. Residues Lys-289 to Asp-309 are compositionally biased toward basic and acidic residues. The segment at Lys-289–Gln-328 is disordered. Phosphoserine is present on Ser-310.

In terms of assembly, interacts with SLC16A1, SLC16A6 and SLC16A7. In terms of processing, N-glycosylated. In terms of tissue distribution, detected in prostate, mammary gland and erythrocytes (at protein level). Detected in testis, brain, prostate, heart, kidney, liver, mammary gland and lung.

The protein resides in the cell membrane. Its subcellular location is the synapse. Its function is as follows. Plays a role in the outgrowth of motoneurons and in the formation of neuromuscular junctions. Following muscle denervation, promotes nerve terminal sprouting and the formation of additional acetylcholine receptor clusters at synaptic sites without affecting terminal Schwann cell number or morphology. Delays the retraction of terminal sprouts following re-innervation of denervated endplates. Plays a role in targeting the monocarboxylate transporters SLC16A1, SLC16A6 and SLC16A7 to the cell membrane. This chain is Embigin (Emb), found in Rattus norvegicus (Rat).